We begin with the raw amino-acid sequence, 458 residues long: Mannan endo-1,6-alpha-mannosidase DFG5 (458 aa).

An N-terminal signal peptide occupies residues 1–26; it reads MIVNISAKMILSICFTFLSFFKATHA. N89, N114, N138, N208, N231, N245, N270, N273, and N417 each carry an N-linked (GlcNAc...) asparagine glycan. Positions 399 to 418 are disordered; it reads PYKEDNGGTSKGDANAGMNS. Residue G437 is the site of GPI-anchor amidated glycine attachment. Positions 438 to 458 are cleaved as a propeptide — removed in mature form; the sequence is AAIITAVILSVLTGGAVWMLF.

It belongs to the glycosyl hydrolase 76 family. Post-translationally, N-glycosylated.

It is found in the cell membrane. It catalyses the reaction Random hydrolysis of (1-&gt;6)-alpha-D-mannosidic linkages in unbranched (1-&gt;6)-mannans.. In terms of biological role, required for normal synthesis of the cell wall. The polypeptide is Mannan endo-1,6-alpha-mannosidase DFG5 (DFG5) (Saccharomyces cerevisiae (strain ATCC 204508 / S288c) (Baker's yeast)).